The chain runs to 112 residues: Ribonuclease P protein component (112 aa).

This sequence belongs to the RnpA family. Consists of a catalytic RNA component (M1 or rnpB) and a protein subunit.

The enzyme catalyses Endonucleolytic cleavage of RNA, removing 5'-extranucleotides from tRNA precursor.. In terms of biological role, RNaseP catalyzes the removal of the 5'-leader sequence from pre-tRNA to produce the mature 5'-terminus. It can also cleave other RNA substrates such as 4.5S RNA. The protein component plays an auxiliary but essential role in vivo by binding to the 5'-leader sequence and broadening the substrate specificity of the ribozyme. This is Ribonuclease P protein component from Mesomycoplasma hyopneumoniae (strain 7448) (Mycoplasma hyopneumoniae).